The chain runs to 813 residues: Xaa-Pro dipeptidyl-peptidase (813 aa).

Residues S375, D495, and H526 each act as charge relay system in the active site.

The protein belongs to the peptidase S15 family. Homodimer.

It is found in the cytoplasm. It carries out the reaction Hydrolyzes Xaa-Pro-|- bonds to release unblocked, N-terminal dipeptides from substrates including Ala-Pro-|-p-nitroanilide and (sequentially) Tyr-Pro-|-Phe-Pro-|-Gly-Pro-|-Ile.. Functionally, removes N-terminal dipeptides sequentially from polypeptides having unsubstituted N-termini provided that the penultimate residue is proline. This is Xaa-Pro dipeptidyl-peptidase from Lactiplantibacillus plantarum (strain ATCC BAA-793 / NCIMB 8826 / WCFS1) (Lactobacillus plantarum).